The primary structure comprises 260 residues: Global transcriptional regulator CodY (260 aa).

The segment at 1-159 is GAF domain; the sequence is MPNLLQKTRK…SSTVVGIQLL (159 aa). The segment at residues 207–226 is a DNA-binding region (H-T-H motif); that stretch reads ASVIADRIGITRSVIVNALR.

Belongs to the CodY family.

The protein resides in the cytoplasm. In terms of biological role, DNA-binding global transcriptional regulator which is involved in the adaptive response to starvation and acts by directly or indirectly controlling the expression of numerous genes in response to nutrient availability. During rapid exponential growth, CodY is highly active and represses genes whose products allow adaptation to nutrient depletion. This chain is Global transcriptional regulator CodY, found in Streptococcus equi subsp. zooepidemicus (strain MGCS10565).